We begin with the raw amino-acid sequence, 204 residues long: Ancillary SecYEG translocon subunit (204 aa).

Over 1-23 the chain is Cytoplasmic; sequence MAYSIEEEQEINQLKDWWKENGK. A helical membrane pass occupies residues 24-42; the sequence is TIIVAFILGVGGMFGWRYW. Residues 43 to 204 lie on the Periplasmic side of the membrane; sequence QTHQAEQIAQ…QMAKMKLNNL (162 aa).

It belongs to the YfgM family. In terms of assembly, interacts with the SecYEG translocon. Forms a complex with PpiD.

It is found in the cell inner membrane. May mediate protein transfer from the SecYEG translocon to the periplasmic chaperone network via its periplasmic C-terminal region. The protein is Ancillary SecYEG translocon subunit of Haemophilus influenzae (strain ATCC 51907 / DSM 11121 / KW20 / Rd).